The primary structure comprises 256 residues: Ribonuclease HII (256 aa).

Positions 67 to 255 (QLVGGVDEVG…VSEMVGLKKA (189 aa)) constitute an RNase H type-2 domain. Positions 73, 74, and 165 each coordinate a divalent metal cation.

This sequence belongs to the RNase HII family. Requires Mn(2+) as cofactor. The cofactor is Mg(2+).

Its subcellular location is the cytoplasm. The enzyme catalyses Endonucleolytic cleavage to 5'-phosphomonoester.. In terms of biological role, endonuclease that specifically degrades the RNA of RNA-DNA hybrids. The chain is Ribonuclease HII from Lactobacillus delbrueckii subsp. bulgaricus (strain ATCC 11842 / DSM 20081 / BCRC 10696 / JCM 1002 / NBRC 13953 / NCIMB 11778 / NCTC 12712 / WDCM 00102 / Lb 14).